Reading from the N-terminus, the 133-residue chain is MPSPINRTKIVKKKTTKFNRFQSDLFKRVGASWRKPRGIDNRVRRRFSGSRAMPSIGFGSAKATKDVCPDGFKRFVIRNVQELEVLLMQNRRYAAVIFHGVSAKSRKAIVERAAELNIKVTTPNARLRSEERE.

It belongs to the eukaryotic ribosomal protein eL32 family.

The polypeptide is Large ribosomal subunit protein eL32 (rpl32) (Dictyostelium discoideum (Social amoeba)).